A 706-amino-acid chain; its full sequence is DNA ligase (706 aa).

NAD(+) contacts are provided by residues D48–D52, S97–L98, and E131. K133 serves as the catalytic N6-AMP-lysine intermediate. 4 residues coordinate NAD(+): R154, E191, K307, and K331. Zn(2+) contacts are provided by C425, C428, C443, and C449. One can recognise a BRCT domain in the interval R628–G706.

Belongs to the NAD-dependent DNA ligase family. LigA subfamily. Requires Mg(2+) as cofactor. Mn(2+) is required as a cofactor.

It carries out the reaction NAD(+) + (deoxyribonucleotide)n-3'-hydroxyl + 5'-phospho-(deoxyribonucleotide)m = (deoxyribonucleotide)n+m + AMP + beta-nicotinamide D-nucleotide.. Its function is as follows. DNA ligase that catalyzes the formation of phosphodiester linkages between 5'-phosphoryl and 3'-hydroxyl groups in double-stranded DNA using NAD as a coenzyme and as the energy source for the reaction. It is essential for DNA replication and repair of damaged DNA. The protein is DNA ligase of Afipia carboxidovorans (strain ATCC 49405 / DSM 1227 / KCTC 32145 / OM5) (Oligotropha carboxidovorans).